A 1183-amino-acid polypeptide reads, in one-letter code: 3-hydroxy-3-methylglutaryl-coenzyme A reductase (1183 aa).

The Cytoplasmic portion of the chain corresponds to 1 to 245; that stretch reads MAAILLPQRF…DLLKNAETLD (245 aa). The 182-residue stretch at 245-426 folds into the SSD domain; the sequence is DIVIMLLGYI…FTFYTAILSI (182 aa). The helical transmembrane segment at 246-266 threads the bilayer; that stretch reads IVIMLLGYIAMHLTFVSLFLS. The Lumenal portion of the chain corresponds to 267 to 273; that stretch reads MRKMGSK. The chain crosses the membrane as a helical span at residues 274 to 294; sequence FWLGICTLFSSVFAFLFGLVV. The Cytoplasmic portion of the chain corresponds to 295–299; sequence TTKLG. Residues 300 to 320 form a helical membrane-spanning segment; it reads VPISVILLSEGLPFLVVTIGF. Residues 321 to 378 lie on the Lumenal side of the membrane; it reads EKNIVLTRAVMSHAIEHRRIQAQNSKSGKRSPERSTQNMIQYAVQAAIKEKGFEIIRD. The helical transmembrane segment at 379–399 threads the bilayer; it reads YAIEIVILVIGAASGVQGGLQ. Residues 400-402 are Cytoplasmic-facing; the sequence is QFC. Residues 403–423 form a helical membrane-spanning segment; it reads FLAAWTLFFDFILLFTFYTAI. The Lumenal segment spans residues 424–482; that stretch reads LSIKLEINRIKRHVDMRMALEDDGVSRRVAENVAKGDDELNRVRGDAPLFGRKSSSIPK. Residues 483–503 form a helical membrane-spanning segment; the sequence is FKVLMILGFIFVNIVNICSIP. Residues 504 to 1183 lie on the Cytoplasmic side of the membrane; that stretch reads FRNPSSMSTI…SAAAIQRSKR (680 aa). The active-site Charge relay system is Glu828. 834–840 is a CoA binding site; it reads SASRGCK. NADP(+)-binding positions include 895 to 897 and 922 to 930; these read SRF and DAMGMNMIS. The active-site Charge relay system is Lys962. CoA is bound at residue 991–993; that stretch reads VLK. Asp1038 (charge relay system) is an active-site residue. Position 1133-1134 (1133-1134) interacts with CoA; it reads AH. His1134 acts as the Proton donor in catalysis. The segment at 1136–1183 is disordered; sequence QHNRSAAPSRSTTPAPPMTPVSLAMTSAQERSASTTSMSAAAIQRSKR. NADP(+) is bound at residue 1138 to 1139; it reads NR. 2 stretches are compositionally biased toward low complexity: residues 1139–1148 and 1167–1177; these read RSAAPSRSTT and SASTTSMSAAA.

The protein belongs to the HMG-CoA reductase family.

It is found in the endoplasmic reticulum membrane. It catalyses the reaction (R)-mevalonate + 2 NADP(+) + CoA = (3S)-3-hydroxy-3-methylglutaryl-CoA + 2 NADPH + 2 H(+). It functions in the pathway metabolic intermediate biosynthesis; (R)-mevalonate biosynthesis; (R)-mevalonate from acetyl-CoA: step 3/3. HMG-CoA reductase; part of the first module of ergosterol biosynthesis pathway that includes the early steps of the pathway, conserved across all eukaryotes, and which results in the formation of mevalonate from acetyl-coenzyme A (acetyl-CoA). In this module, the cytosolic acetyl-CoA acetyltransferase catalyzes the formation of acetoacetyl-CoA. The hydroxymethylglutaryl-CoA synthase then condenses acetyl-CoA with acetoacetyl-CoA to form HMG-CoA. The rate-limiting step of the early module is the reduction to mevalonate by the 3-hydroxy-3-methylglutaryl-coenzyme A (HMG-CoA) reductase HMGR. The polypeptide is 3-hydroxy-3-methylglutaryl-coenzyme A reductase (HMGR) (Gibberella fujikuroi (strain CBS 195.34 / IMI 58289 / NRRL A-6831) (Bakanae and foot rot disease fungus)).